Reading from the N-terminus, the 108-residue chain is Histone H4 (108 aa).

The disordered stretch occupies residues 1–24; that stretch reads MTGRGKGGKVLSLGGKGGKGAKRH. Residues 17-21 mediate DNA binding; the sequence is GGKGA.

This sequence belongs to the histone H4 family. As to quaternary structure, the nucleosome is a histone octamer containing two molecules each of H2A, H2B, H3 and H4 assembled in one H3-H4 heterotetramer and two H2A-H2B heterodimers. The octamer wraps approximately 147 bp of DNA.

It is found in the nucleus. It localises to the chromosome. Core component of nucleosome. Nucleosomes wrap and compact DNA into chromatin, limiting DNA accessibility to the cellular machineries which require DNA as a template. Histones thereby play a central role in transcription regulation, DNA repair, DNA replication and chromosomal stability. DNA accessibility is regulated via a complex set of post-translational modifications of histones, also called histone code, and nucleosome remodeling. This is Histone H4 from Mastigamoeba balamuthi (Phreatamoeba balamuthi).